Reading from the N-terminus, the 472-residue chain is uncharacterized protein (472 aa).

6 helical membrane-spanning segments follow: residues 4-24, 27-47, 56-76, 99-119, 140-160, and 176-196; these read IIIL…FSVI, APIC…LPFF, AGFI…GKVV, ILAI…LFVV, LIPG…LPGT, and IYAA…AGML. Residues 209–229 are disordered; sequence GEGYGGFDSQNAPAPESIESA. Positions 220–229 are enriched in low complexity; that stretch reads APAPESIESA. The next 5 helical transmembrane spans lie at 240-260, 286-306, 323-343, 372-392, and 448-468; these read ALAF…TIYL, AAAI…TILF, IGGA…GGII, TALA…LSAM, and IFAI…IYSL.

This sequence belongs to the CitM (TC 2.A.11) transporter family.

It localises to the cell membrane. This is an uncharacterized protein from Bacillus subtilis (strain 168).